The sequence spans 519 residues: Sorting nexin-2 (519 aa).

Residues 30-50 are compositionally biased toward low complexity; it reads STVSTLESSPSSPEPASLPAE. The tract at residues 30–62 is disordered; it reads STVSTLESSPSSPEPASLPAEDISANSNGSKPV. Ser97 carries the post-translational modification Phosphoserine. Residues Thr101 and Thr104 each carry the phosphothreonine modification. 2 positions are modified to phosphoserine: Ser117 and Ser119. One can recognise a PX domain in the interval 140–269; that stretch reads FDIEIGVSDP…QFLESSELPR (130 aa). Residues Arg183, Ser185, Lys211, and Arg235 each coordinate a 1,2-diacyl-sn-glycero-3-phospho-(1D-myo-inositol-3-phosphate). The residue at position 185 (Ser185) is a Phosphoserine. The interaction with RhoG stretch occupies residues 260–519; that stretch reads QFLESSELPR…AFLPEAKAIA (260 aa). Ser277 carries the post-translational modification Phosphoserine. A membrane-binding amphipathic helix region spans residues 278–295; it reads GAGILRMVNKAADAVNKM. Positions 299 to 519 constitute a BAR domain; it reads MNESDAWFEE…AFLPEAKAIA (221 aa). The residue at position 469 (Lys469) is an N6-acetyllysine.

Belongs to the sorting nexin family. As to quaternary structure, predominantly forms heterodimers with BAR domain-containing sorting nexins SNX5, SNX6 and SNX32; can self-associate to form homodimers. The heterodimers are proposed to self-assemble into helical arrays on the membrane to stabilize and expand local membrane curvature underlying endosomal tubule formation. Thought to be a component of the originally described retromer complex (also called SNX-BAR retromer) which is a pentamer containing the heterotrimeric retromer cargo-selective complex (CSC), also described as vacuolar protein sorting subcomplex (VPS), and a heterodimeric membrane-deforming subcomplex formed between SNX1 or SNX2 and SNX5 or SNX6 (also called SNX-BAR subcomplex); the respective CSC and SNX-BAR subcomplexes associate with low affinity. Interacts with SNX5, SNX6, SNX32, VPS26A, VPS29, VPS35, FNBP1, KALRN, RHOG (GDP-bound form).

The protein localises to the early endosome membrane. The protein resides in the cell projection. It localises to the lamellipodium. Functionally, involved in several stages of intracellular trafficking. Interacts with membranes containing phosphatidylinositol 3-phosphate (PtdIns(3P)) or phosphatidylinositol 3,5-bisphosphate (PtdIns(3,5)P2). Acts in part as component of the retromer membrane-deforming SNX-BAR subcomplex. The SNX-BAR retromer mediates retrograde transport of cargo proteins from endosomes to the trans-Golgi network (TGN) and is involved in endosome-to-plasma membrane transport for cargo protein recycling. The SNX-BAR subcomplex functions to deform the donor membrane into a tubular profile called endosome-to-TGN transport carrier (ETC). Can sense membrane curvature and has in vitro vesicle-to-membrane remodeling activity. Required for retrograde endosome-to-TGN transport of TGN38. Promotes KALRN- and RHOG-dependent but retromer-independent membrane remodeling such as lamellipodium formation; the function is dependent on GEF activity of KALRN. This Mus musculus (Mouse) protein is Sorting nexin-2 (Snx2).